The sequence spans 578 residues: E3 ubiquitin-protein ligase hrd-like protein 1 (578 aa).

A helical transmembrane segment spans residues 32-52; it reads GYLALSLCVAFIASASVFTHF. N-linked (GlcNAc...) asparagine glycosylation occurs at asparagine 68. Helical transmembrane passes span 76-96, 101-121, 134-154, 163-183, 202-222, 230-250, and 286-306; these read FGIN…HYIL, LIWV…KLII, VAAR…LSVV, VMPW…QFVT, SFIS…VSRF, PAVL…YILF, and FLSY…SIFF. The RING-type; atypical zinc finger occupies 350-388; the sequence is CIVCWELLGTSRRLPCSHQFHDWCLMWWLAQDSSCPTCR. The CUE domain maps to 447 to 489; the sequence is QLQSMLETVLEMFPQMSPETILADLRQSGSAQSTIENILEGRM. N-linked (GlcNAc...) asparagine glycosylation occurs at asparagine 492.

It localises to the membrane. In terms of biological role, proposed to have a role in neuroprotection. This Caenorhabditis briggsae protein is E3 ubiquitin-protein ligase hrd-like protein 1.